Here is a 271-residue protein sequence, read N- to C-terminus: MPVSQSRARARDRNNVLNRAEFLSLNQPPKGTQEPRSSGRKASGPSTQPPPSSDGARERRQSQQLPEEDCMQLNPSFKGIAFNSLLAIDICMSKRLGVCAGRAASWASARSMVKLIGITSHGIPWIGGTILCLVRSSTLAGQEVLMNLLLALLLDIMTVAGVQKLIKRRGPYETSPGLLDYLTMDIYAFPAGHASRAAMVSKFFLSHLVLAVPLRVLLVLWAFCVGLSRVMIGRHHITDVISGFIIGYFQFRLVELVWMSSNTCQMLISAW.

The interval 1-69 (MPVSQSRARA…RQSQQLPEED (69 aa)) is disordered. Residues 1–112 (MPVSQSRARA…AASWASARSM (112 aa)) are Cytoplasmic-facing. Over residues 24–36 (SLNQPPKGTQEPR) the composition is skewed to polar residues. Phosphoserine is present on residues Ser-43 and Ser-62. The interval 70 to 91 (CMQLNPSFKGIAFNSLLAIDIC) is interaction with MTOR. The helical transmembrane segment at 113-133 (VKLIGITSHGIPWIGGTILCL) threads the bilayer. Over 134-141 (VRSSTLAG) the chain is Extracellular. The helical transmembrane segment at 142 to 162 (QEVLMNLLLALLLDIMTVAGV) threads the bilayer. Topologically, residues 163 to 202 (QKLIKRRGPYETSPGLLDYLTMDIYAFPAGHASRAAMVSK) are cytoplasmic. A helical membrane pass occupies residues 203-223 (FFLSHLVLAVPLRVLLVLWAF). Residues 224–239 (CVGLSRVMIGRHHITD) lie on the Extracellular side of the membrane. Residues 240 to 260 (VISGFIIGYFQFRLVELVWMS) form a helical membrane-spanning segment. At 261–271 (SNTCQMLISAW) the chain is on the cytoplasmic side.

It belongs to the PA-phosphatase related phosphoesterase family. Homo- and heterooligomer. Interacts with MTOR; controls MTOR-dependent IGF2 expression during myoblast differentiation.

It is found in the nucleus envelope. The protein resides in the endoplasmic reticulum membrane. Its subcellular location is the membrane. Functionally, plays a role as negative regulator of myoblast differentiation, in part through effects on MTOR signaling. Has no detectable enzymatic activity. In Rattus norvegicus (Rat), this protein is Inactive phospholipid phosphatase 7.